Consider the following 63-residue polypeptide: Large ribosomal subunit protein bL28 (63 aa).

Belongs to the bacterial ribosomal protein bL28 family.

This chain is Large ribosomal subunit protein bL28, found in Thermomicrobium roseum (strain ATCC 27502 / DSM 5159 / P-2).